Reading from the N-terminus, the 57-residue chain is Large ribosomal subunit protein bL32 (57 aa).

It belongs to the bacterial ribosomal protein bL32 family.

The chain is Large ribosomal subunit protein bL32 from Staphylococcus haemolyticus (strain JCSC1435).